Consider the following 745-residue polypeptide: Elongation factor G, mitochondrial (745 aa).

Residues Glu-40–Gly-317 enclose the tr-type G domain. GTP is bound by residues Ala-49–Thr-56, Asp-116–His-120, and Asn-170–Asp-173.

This sequence belongs to the TRAFAC class translation factor GTPase superfamily. Classic translation factor GTPase family. EF-G/EF-2 subfamily.

It localises to the mitochondrion. The protein operates within protein biosynthesis; polypeptide chain elongation. Its function is as follows. Mitochondrial GTPase that catalyzes the GTP-dependent ribosomal translocation step during translation elongation. During this step, the ribosome changes from the pre-translocational (PRE) to the post-translocational (POST) state as the newly formed A-site-bound peptidyl-tRNA and P-site-bound deacylated tRNA move to the P and E sites, respectively. Catalyzes the coordinated movement of the two tRNA molecules, the mRNA and conformational changes in the ribosome. Essential during development as it acts as a retrograde signal from mitochondria to the nucleus to slow down cell proliferation if mitochondrial energy output is low. This Drosophila sechellia (Fruit fly) protein is Elongation factor G, mitochondrial.